The following is a 302-amino-acid chain: ATP synthase gamma chain (302 aa).

The protein belongs to the ATPase gamma chain family. As to quaternary structure, F-type ATPases have 2 components, CF(1) - the catalytic core - and CF(0) - the membrane proton channel. CF(1) has five subunits: alpha(3), beta(3), gamma(1), delta(1), epsilon(1). CF(0) has three main subunits: a, b and c.

The protein localises to the cell membrane. In terms of biological role, produces ATP from ADP in the presence of a proton gradient across the membrane. The gamma chain is believed to be important in regulating ATPase activity and the flow of protons through the CF(0) complex. This chain is ATP synthase gamma chain, found in Leuconostoc citreum (strain KM20).